The following is a 127-amino-acid chain: Calcitonin receptor-stimulating peptide 2 (127 aa).

Positions 1 to 25 are cleaved as a signal peptide; that stretch reads MGFWKLSPFLAIGLLVMYQAGILQA. The propeptide occupies 26 to 81; that stretch reads APFRSALENPLESATLTEDEICVLLTAVVKDYVQMKARELQQEQETEGSSLTAQKS. The segment at 65 to 85 is disordered; sequence LQQEQETEGSSLTAQKSSCKD. A compositionally biased stretch (polar residues) spans 72–81; it reads EGSSLTAQKS. Residues C83 and C88 are joined by a disulfide bond.

It belongs to the calcitonin family.

It localises to the secreted. The polypeptide is Calcitonin receptor-stimulating peptide 2 (CRSP2) (Canis lupus familiaris (Dog)).